The primary structure comprises 478 residues: UDP-N-acetylmuramate--L-alanine ligase (478 aa).

Position 122–128 (122–128) interacts with ATP; the sequence is GTHGKTT.

Belongs to the MurCDEF family.

The protein localises to the cytoplasm. It carries out the reaction UDP-N-acetyl-alpha-D-muramate + L-alanine + ATP = UDP-N-acetyl-alpha-D-muramoyl-L-alanine + ADP + phosphate + H(+). It participates in cell wall biogenesis; peptidoglycan biosynthesis. Its function is as follows. Cell wall formation. The chain is UDP-N-acetylmuramate--L-alanine ligase from Stenotrophomonas maltophilia (strain R551-3).